Consider the following 1522-residue polypeptide: Rho guanine nucleotide exchange factor 11 (1522 aa).

Positions 1–40 are disordered; sequence MSVRLPQSIDRLSSLSSLGDSAPERKSPSHHRQPSDASET. Phosphoserine occurs at positions 2, 14, 16, and 35. One can recognise a PDZ domain in the interval 47 to 126; it reads CVIIQKDQHG…LTLLGSSPSS (80 aa). 2 disordered regions span residues 128–175 and 200–231; these read GISG…PEVQ and YGDT…ERFP. The segment covering 149–161 has biased composition (pro residues); it reads PSPPPPPPLPPPQ. Phosphoserine occurs at positions 245 and 251. Threonine 254 carries the post-translational modification Phosphothreonine. Serine 255 and serine 271 each carry phosphoserine. Residues 263 to 286 form a disordered region; sequence AQHHRRQGSDAAVPSTGDQGVDQS. The 181-residue stretch at 306–486 folds into the RGSL domain; it reads ESDIIFQDLE…NTYMSHAGIR (181 aa). Residues 444–470 are a coiled coil; the sequence is LRERQVAEKQLAALGDILSKYEEDRSA. The tract at residues 490-555 is disordered; it reads ARPSNTAEKA…SSQSTFHIPL (66 aa). Over residues 521–533 the composition is skewed to basic and acidic residues; sequence SKKEKDALEDKKR. Residues serine 556, serine 635, and serine 663 each carry the phosphoserine modification. Residues 573 to 680 are disordered; it reads ENNQQYDAPE…FTPKMGRRSI (108 aa). Over residues 601 to 637 the composition is skewed to basic and acidic residues; the sequence is DSSRSEIRLGRSESLKGREEMKRSRKAENVPRSRSDV. The segment covering 651–664 has biased composition (low complexity); the sequence is SASSSTSSLSTRSL. Threonine 668 and threonine 672 each carry phosphothreonine. Positions 734–923 constitute a DH domain; sequence DRQEVINELF…REILKYVNEA (190 aa). Positions 965 to 1079 constitute a PH domain; that stretch reads KMIHEGPLTW…WMELLEEAVR (115 aa). Positions 1084-1141 are disordered; that stretch reads HPGAAPMPVHPPPPGPREPAQQGPTPSRVELDDSDVFHGEPEPEELPGGTGSQQRVQG. Residues 1091–1100 are compositionally biased toward pro residues; it reads PVHPPPPGPR. Residues 1112–1124 are compositionally biased toward basic and acidic residues; the sequence is VELDDSDVFHGEP. The residue at position 1155 (serine 1155) is a Phosphoserine. Disordered stretches follow at residues 1223–1320, 1332–1423, and 1453–1522; these read ETQA…AGGY, KVVP…RDVG, and LGGE…SPGP. Residues 1236–1245 show a composition bias toward polar residues; that stretch reads PTPSVISVTS. 2 positions are modified to phosphoserine: serine 1295 and serine 1300. The span at 1338 to 1353 shows a compositional bias: low complexity; the sequence is PESGQSEPGPPEVEGG. Serine 1457 and serine 1458 each carry phosphoserine. 2 positions are modified to phosphothreonine: threonine 1462 and threonine 1475. A Phosphoserine modification is found at serine 1480. Residues 1503 to 1513 are compositionally biased toward acidic residues; that stretch reads DGSDAPLEDST.

As to quaternary structure, interacts with GNA12 and GNA13 through the RGS domain. Interacts with RHOA, PLXNB1 and PLXNB2. Interacts with SLC1A6. Interacts (via DH domain) with GCSAM (via C-terminus). Found in a complex with ARHGEF11 and ARHGEF12; binding to ARHGEF11 and ARHGEF12 enhances CDC42 GEF activity of PLEKHG4B, and PLEKHG4B, in turn, inhibits ARHGEF11- and ARHGEF12-mediated RHOA activation. In terms of processing, phosphorylated by MAP kinase p38 (MAPK11, MAPK12, MAPK13 and/or MAPK14). Post-translationally, ubiquitinated by the BCR(KLHL20) E3 ubiquitin ligase complex when previously phosphorylated by MAP kinase p38 (MAPK11, MAPK12, MAPK13 and/or MAPK14), leading to its degradation, thereby restricting RhoA activity and facilitating growth cone spreading and neurite outgrowth. Ubiquitously expressed.

Its subcellular location is the cytoplasm. It is found in the membrane. May play a role in the regulation of RhoA GTPase by guanine nucleotide-binding alpha-12 (GNA12) and alpha-13 (GNA13). Acts as guanine nucleotide exchange factor (GEF) for RhoA GTPase and may act as GTPase-activating protein (GAP) for GNA12 and GNA13. Involved in neurotrophin-induced neurite outgrowth. This is Rho guanine nucleotide exchange factor 11 (ARHGEF11) from Homo sapiens (Human).